The chain runs to 513 residues: ATP synthase subunit alpha (513 aa).

Residue 169 to 176 (GDRQTGKT) participates in ATP binding.

Belongs to the ATPase alpha/beta chains family. As to quaternary structure, F-type ATPases have 2 components, CF(1) - the catalytic core - and CF(0) - the membrane proton channel. CF(1) has five subunits: alpha(3), beta(3), gamma(1), delta(1), epsilon(1). CF(0) has three main subunits: a(1), b(2) and c(9-12). The alpha and beta chains form an alternating ring which encloses part of the gamma chain. CF(1) is attached to CF(0) by a central stalk formed by the gamma and epsilon chains, while a peripheral stalk is formed by the delta and b chains.

Its subcellular location is the cell inner membrane. The catalysed reaction is ATP + H2O + 4 H(+)(in) = ADP + phosphate + 5 H(+)(out). Functionally, produces ATP from ADP in the presence of a proton gradient across the membrane. The alpha chain is a regulatory subunit. This chain is ATP synthase subunit alpha, found in Aliivibrio fischeri (strain ATCC 700601 / ES114) (Vibrio fischeri).